The chain runs to 684 residues: Frizzled-8 (684 aa).

A signal peptide spans methionine 1 to alanine 27. Residues alanine 28–alanine 271 are Extracellular-facing. The 122-residue stretch at alanine 30–tyrosine 151 folds into the FZ domain. 5 disulfides stabilise this stretch: cysteine 35–cysteine 96, cysteine 43–cysteine 89, cysteine 80–cysteine 118, cysteine 107–cysteine 148, and cysteine 111–cysteine 135. An N-linked (GlcNAc...) asparagine glycan is attached at asparagine 49. Residue glutamine 71–isoleucine 78 coordinates hexadecanoate. The interval isoleucine 95–tyrosine 100 is wnt-binding. Positions leucine 147–asparagine 152 are wnt-binding. Asparagine 152 carries N-linked (GlcNAc...) asparagine glycosylation. The interval aspartate 155 to alanine 222 is disordered. The span at proline 161–glutamine 175 shows a compositional bias: pro residues. Low complexity-rich tracts occupy residues proline 176 to proline 186 and glycine 199 to alanine 222. Residues phenylalanine 272–valine 292 traverse the membrane as a helical segment. Residues serine 293–proline 308 lie on the Cytoplasmic side of the membrane. A helical membrane pass occupies residues isoleucine 309–alanine 329. Topologically, residues glycine 330–cysteine 393 are extracellular. Residues threonine 394–leucine 414 traverse the membrane as a helical segment. The Cytoplasmic portion of the chain corresponds to serine 415 to glutamine 436. The chain crosses the membrane as a helical span at residues tyrosine 437–serine 457. The Extracellular portion of the chain corresponds to serine 458–glycine 480. Residue asparagine 472 is glycosylated (N-linked (GlcNAc...) asparagine). Residues phenylalanine 481–phenylalanine 501 traverse the membrane as a helical segment. Residues valine 502 to arginine 529 are Cytoplasmic-facing. The chain crosses the membrane as a helical span at residues leucine 530–tyrosine 550. Over glutamate 551 to alanine 581 the chain is Extracellular. Residues valine 582–tryptophan 602 traverse the membrane as a helical segment. At serine 603–valine 684 the chain is on the cytoplasmic side. The short motif at lysine 605–tryptophan 610 is the Lys-Thr-X-X-X-Trp motif, mediates interaction with the PDZ domain of Dvl family members element. The span at alanine 630–serine 654 shows a compositional bias: gly residues. Residues alanine 630–leucine 655 form a disordered region. The PDZ-binding motif lies at serine 682–valine 684.

Belongs to the G-protein coupled receptor Fz/Smo family. As to quaternary structure, component of a Wnt-signaling complex that contains a WNT protein, a FZD protein and LRP5 or LRP6. Interacts directly with LRP5 or LRP6; the interaction is promoted by Wnt-binding and signaling and inhibited by DKK1. Interacts (via the PDZ-binding motif) with GPOC (via its PDZ domain). Interacts with RSPO1 and RSPO3. Interacts with glypican GPC3. Post-translationally, ubiquitinated by ZNRF3, leading to its degradation by the proteasome.

The protein resides in the membrane. It is found in the golgi apparatus. Its subcellular location is the cell membrane. Its function is as follows. Receptor for Wnt proteins. Component of the Wnt-Fzd-LRP5-LRP6 complex that triggers beta-catenin signaling through inducing aggregation of receptor-ligand complexes into ribosome-sized signalosomes. The beta-catenin canonical signaling pathway leads to the activation of disheveled proteins, inhibition of GSK-3 kinase, nuclear accumulation of beta-catenin and activation of Wnt target genes. A second signaling pathway involving PKC and calcium fluxes has been seen for some family members, but it is not yet clear if it represents a distinct pathway or if it can be integrated in the canonical pathway, as PKC seems to be required for Wnt-mediated inactivation of GSK-3 kinase. Both pathways seem to involve interactions with G-proteins. May be involved in transduction and intercellular transmission of polarity information during tissue morphogenesis and/or in differentiated tissues. Coreceptor along with RYK of Wnt proteins, such as WNT1. This Rattus norvegicus (Rat) protein is Frizzled-8 (Fzd8).